The primary structure comprises 1090 residues: UPF0507 protein SCY_4172 (1090 aa).

The 148-residue stretch at 289–436 (FSVNQLLTDF…FEDFNKNTGN (148 aa)) folds into the VPS9 domain.

Belongs to the UPF0507 family.

The chain is UPF0507 protein SCY_4172 from Saccharomyces cerevisiae (strain YJM789) (Baker's yeast).